A 170-amino-acid polypeptide reads, in one-letter code: Adenine phosphoribosyltransferase (170 aa).

Belongs to the purine/pyrimidine phosphoribosyltransferase family. In terms of assembly, homodimer.

The protein resides in the cytoplasm. It carries out the reaction AMP + diphosphate = 5-phospho-alpha-D-ribose 1-diphosphate + adenine. The protein operates within purine metabolism; AMP biosynthesis via salvage pathway; AMP from adenine: step 1/1. Its function is as follows. Catalyzes a salvage reaction resulting in the formation of AMP, that is energically less costly than de novo synthesis. This chain is Adenine phosphoribosyltransferase, found in Bacillus cereus (strain G9842).